Here is a 430-residue protein sequence, read N- to C-terminus: Enolase (430 aa).

Residue Gln-163 coordinates (2R)-2-phosphoglycerate. Residue Glu-205 is the Proton donor of the active site. The Mg(2+) site is built by Asp-242, Glu-286, and Asp-313. The (2R)-2-phosphoglycerate site is built by Lys-338, Arg-367, Ser-368, and Lys-389. The Proton acceptor role is filled by Lys-338.

It belongs to the enolase family. The cofactor is Mg(2+).

It localises to the cytoplasm. It is found in the secreted. The protein localises to the cell surface. It catalyses the reaction (2R)-2-phosphoglycerate = phosphoenolpyruvate + H2O. It functions in the pathway carbohydrate degradation; glycolysis; pyruvate from D-glyceraldehyde 3-phosphate: step 4/5. Functionally, catalyzes the reversible conversion of 2-phosphoglycerate (2-PG) into phosphoenolpyruvate (PEP). It is essential for the degradation of carbohydrates via glycolysis. This is Enolase from Geotalea daltonii (strain DSM 22248 / JCM 15807 / FRC-32) (Geobacter daltonii).